A 229-amino-acid polypeptide reads, in one-letter code: Aquaporin Z (229 aa).

2 helical membrane passes run 8–28 and 33–53; these read FFGT…AAGV and IGYL…AYAI. The short motif at 62 to 64 is the NPA 1 element; the sequence is NPA. The next 3 membrane-spanning stretches (helical) occupy residues 81–101, 131–151, and 158–178; these read LPYV…LYLI, AALV…LGAT, and GFAP…SIPV. Positions 184–186 match the NPA 2 motif; it reads NPA. The chain crosses the membrane as a helical span at residues 199–219; sequence AVSQLWLFWVAPILGAVLGAL.

Belongs to the MIP/aquaporin (TC 1.A.8) family. As to quaternary structure, homotetramer.

It is found in the cell inner membrane. It catalyses the reaction H2O(in) = H2O(out). Channel that permits osmotically driven movement of water in both directions. It is involved in the osmoregulation and in the maintenance of cell turgor during volume expansion in rapidly growing cells. It mediates rapid entry or exit of water in response to abrupt changes in osmolarity. The sequence is that of Aquaporin Z from Pseudomonas aeruginosa (strain ATCC 15692 / DSM 22644 / CIP 104116 / JCM 14847 / LMG 12228 / 1C / PRS 101 / PAO1).